A 371-amino-acid polypeptide reads, in one-letter code: Flagellar P-ring protein (371 aa).

Positions 1–28 (MPARPTPPAVPLALALAAALAAPAPAAA) are cleaved as a signal peptide.

The protein belongs to the FlgI family. In terms of assembly, the basal body constitutes a major portion of the flagellar organelle and consists of four rings (L,P,S, and M) mounted on a central rod.

It is found in the periplasm. The protein localises to the bacterial flagellum basal body. In terms of biological role, assembles around the rod to form the L-ring and probably protects the motor/basal body from shearing forces during rotation. This is Flagellar P-ring protein from Anaeromyxobacter dehalogenans (strain 2CP-C).